The chain runs to 413 residues: Arginine deiminase (413 aa).

The Amidino-cysteine intermediate role is filled by Cys403.

The protein belongs to the arginine deiminase family.

The protein resides in the cytoplasm. The enzyme catalyses L-arginine + H2O = L-citrulline + NH4(+). It participates in amino-acid degradation; L-arginine degradation via ADI pathway; carbamoyl phosphate from L-arginine: step 1/2. The protein is Arginine deiminase of Clostridium perfringens (strain SM101 / Type A).